Consider the following 536-residue polypeptide: Glucose-6-phosphate isomerase (536 aa).

The Proton donor role is filled by Glu-345. Active-site residues include His-376 and Lys-505.

It belongs to the GPI family.

It localises to the cytoplasm. It catalyses the reaction alpha-D-glucose 6-phosphate = beta-D-fructose 6-phosphate. The protein operates within carbohydrate biosynthesis; gluconeogenesis. It participates in carbohydrate degradation; glycolysis; D-glyceraldehyde 3-phosphate and glycerone phosphate from D-glucose: step 2/4. In terms of biological role, catalyzes the reversible isomerization of glucose-6-phosphate to fructose-6-phosphate. The chain is Glucose-6-phosphate isomerase from Ruegeria sp. (strain TM1040) (Silicibacter sp.).